The sequence spans 157 residues: ATP synthase subunit b 1 (157 aa).

The chain crosses the membrane as a helical span at residues 7-29 (LFGQMVTFALLVWFTMKYVWPPL).

The protein belongs to the ATPase B chain family. In terms of assembly, F-type ATPases have 2 components, F(1) - the catalytic core - and F(0) - the membrane proton channel. F(1) has five subunits: alpha(3), beta(3), gamma(1), delta(1), epsilon(1). F(0) has three main subunits: a(1), b(2) and c(10-14). The alpha and beta chains form an alternating ring which encloses part of the gamma chain. F(1) is attached to F(0) by a central stalk formed by the gamma and epsilon chains, while a peripheral stalk is formed by the delta and b chains.

Its subcellular location is the cell inner membrane. In terms of biological role, f(1)F(0) ATP synthase produces ATP from ADP in the presence of a proton or sodium gradient. F-type ATPases consist of two structural domains, F(1) containing the extramembraneous catalytic core and F(0) containing the membrane proton channel, linked together by a central stalk and a peripheral stalk. During catalysis, ATP synthesis in the catalytic domain of F(1) is coupled via a rotary mechanism of the central stalk subunits to proton translocation. Component of the F(0) channel, it forms part of the peripheral stalk, linking F(1) to F(0). This is ATP synthase subunit b 1 from Methylococcus capsulatus (strain ATCC 33009 / NCIMB 11132 / Bath).